The primary structure comprises 149 residues: Arginine repressor (149 aa).

Belongs to the ArgR family.

The protein resides in the cytoplasm. The protein operates within amino-acid biosynthesis; L-arginine biosynthesis [regulation]. In terms of biological role, regulates arginine biosynthesis genes. This is Arginine repressor from Listeria innocua serovar 6a (strain ATCC BAA-680 / CLIP 11262).